The primary structure comprises 340 residues: Phosphate acyltransferase (340 aa).

This sequence belongs to the PlsX family. As to quaternary structure, homodimer. Probably interacts with PlsY.

The protein resides in the cytoplasm. The enzyme catalyses a fatty acyl-[ACP] + phosphate = an acyl phosphate + holo-[ACP]. It functions in the pathway lipid metabolism; phospholipid metabolism. Functionally, catalyzes the reversible formation of acyl-phosphate (acyl-PO(4)) from acyl-[acyl-carrier-protein] (acyl-ACP). This enzyme utilizes acyl-ACP as fatty acyl donor, but not acyl-CoA. This is Phosphate acyltransferase from Nostoc punctiforme (strain ATCC 29133 / PCC 73102).